A 316-amino-acid chain; its full sequence is PDZ and LIM domain protein 3 (316 aa).

In terms of domain architecture, PDZ spans 1–84 (MPQNVVLPGP…QLCLKIDRAE (84 aa)). Phosphoserine occurs at positions 18 and 93. Arginine 164 carries the post-translational modification Omega-N-methylarginine. The LIM zinc-binding domain occupies 244–303 (PLCDKCGSGIVGAVVKARDKYRHPECFVCADCNLNLKQKGYFFVEGELYCETHARARTRP).

As to quaternary structure, interacts with ACTN2. Forms a heterodimer with PDLIM4 (via LIM domain).

Its subcellular location is the cytoplasm. It is found in the myofibril. It localises to the sarcomere. The protein resides in the z line. Its function is as follows. May play a role in the organization of actin filament arrays within muscle cells. This chain is PDZ and LIM domain protein 3 (Pdlim3), found in Mus musculus (Mouse).